A 66-amino-acid polypeptide reads, in one-letter code: Sodium/potassium-transporting ATPase subunit gamma (66 aa).

A helical transmembrane segment spans residues 29-46 (GGLIFAGLAFIVGLLILL).

Belongs to the FXYD family. In terms of assembly, regulatory subunit of the sodium/potassium-transporting ATPase which is composed of a catalytic alpha subunit, an auxiliary non-catalytic beta subunit and an additional regulatory subunit. In terms of tissue distribution, expressed in the distal convoluted tubule in the kidney. Found on basolateral membranes of nephron epithelial cells.

Its subcellular location is the membrane. Its function is as follows. May be involved in forming the receptor site for cardiac glycoside binding or may modulate the transport function of the sodium ATPase. The polypeptide is Sodium/potassium-transporting ATPase subunit gamma (FXYD2) (Homo sapiens (Human)).